A 307-amino-acid polypeptide reads, in one-letter code: Ribosomal protein L11 methyltransferase (307 aa).

S-adenosyl-L-methionine contacts are provided by T162, G183, D205, and N244.

It belongs to the methyltransferase superfamily. PrmA family.

The protein resides in the cytoplasm. The catalysed reaction is L-lysyl-[protein] + 3 S-adenosyl-L-methionine = N(6),N(6),N(6)-trimethyl-L-lysyl-[protein] + 3 S-adenosyl-L-homocysteine + 3 H(+). Methylates ribosomal protein L11. In Bordetella parapertussis (strain 12822 / ATCC BAA-587 / NCTC 13253), this protein is Ribosomal protein L11 methyltransferase.